A 313-amino-acid chain; its full sequence is 3-O-acetylpapaveroxine carboxylesterase CXE2 (313 aa).

The short motif at 72 to 74 (HGG) is the Involved in the stabilization of the negatively charged intermediate by the formation of the oxyanion hole element. Catalysis depends on residues S158, D262, and H292.

The protein belongs to the 'GDXG' lipolytic enzyme family.

The enzyme catalyses 3-O-acetylpapaveroxine + H2O = narcotine hemiacetal + acetate + H(+). It participates in alkaloid biosynthesis. Carboxylesterase involved in the biosynthesis of the benzylisoquinoline alkaloid noscapine. Converts 3-O-acetylpapaveroxine to narcotine hemiacetal. This chain is 3-O-acetylpapaveroxine carboxylesterase CXE2, found in Papaver somniferum (Opium poppy).